The following is a 251-amino-acid chain: Dihydroorotate dehydrogenase B (NAD(+)), electron transfer subunit homolog (251 aa).

An FAD-binding FR-type domain is found at 2 to 101 (LAELNAEVLE…FLPLGKRLFS (100 aa)). Positions 217, 222, 225, and 238 each coordinate [2Fe-2S] cluster.

It belongs to the PyrK family. [2Fe-2S] cluster is required as a cofactor. FAD serves as cofactor.

This is Dihydroorotate dehydrogenase B (NAD(+)), electron transfer subunit homolog from Aquifex aeolicus (strain VF5).